Reading from the N-terminus, the 748-residue chain is Formate acetyltransferase (748 aa).

Positions 5-618 (NNHTNAWQGF…KTGNTPDGRK (614 aa)) constitute a PFL domain. Catalysis depends on Cys412, which acts as the S-acetylcysteine intermediate. Cys413 serves as the catalytic Cysteine radical intermediate. Residues 625–748 (PGANPMHGRD…VISRTFHESM (124 aa)) form the Glycine radical domain. Gly723 bears the Glycine radical mark.

It belongs to the glycyl radical enzyme (GRE) family. PFL subfamily. Homodimer.

The protein localises to the cytoplasm. The catalysed reaction is formate + acetyl-CoA = pyruvate + CoA. It participates in fermentation; pyruvate fermentation; formate from pyruvate: step 1/1. In terms of biological role, catalyzes the conversion of pyruvate to formate and acetyl-CoA. This chain is Formate acetyltransferase (pflB), found in Staphylococcus epidermidis (strain ATCC 12228 / FDA PCI 1200).